The sequence spans 530 residues: Na(+)/H(+) antiporter NhaB (530 aa).

A run of 12 helical transmembrane segments spans residues 13–33 (FLGK…IINP), 98–118 (LLLV…LFIF), 123–145 (LGIQ…LSAF), 149–166 (LTVI…YSIY), 205–225 (LLMH…VGEP), 238–258 (FGEF…CGIL), 308–328 (IAVW…LIGL), 330–350 (VIIL…GKAF), 356–376 (FTAL…QALF), 393–413 (LALF…VFVG), 451–471 (ATPN…APLI), and 480–500 (IMAL…IVFF).

It belongs to the NhaB Na(+)/H(+) (TC 2.A.34) antiporter family.

It localises to the cell inner membrane. The enzyme catalyses 2 Na(+)(in) + 3 H(+)(out) = 2 Na(+)(out) + 3 H(+)(in). Its function is as follows. Na(+)/H(+) antiporter that extrudes sodium in exchange for external protons. In Vibrio atlanticus (strain LGP32) (Vibrio splendidus (strain Mel32)), this protein is Na(+)/H(+) antiporter NhaB.